Here is a 515-residue protein sequence, read N- to C-terminus: BURP domain-containing protein 9 (515 aa).

The signal sequence occupies residues 1–29 (MKATGGPLPLILFLLIIIVLITAQHTAIA). One can recognise a BURP domain in the interval 292 to 507 (YFFEDNLAPG…GRGSIIWVPV (216 aa)). N-linked (GlcNAc...) asparagine glycosylation is found at Asn-321, Asn-332, and Asn-470.

In terms of tissue distribution, expressed in shoot and panicles.

The protein is BURP domain-containing protein 9 (BURP9) of Oryza sativa subsp. japonica (Rice).